The primary structure comprises 458 residues: Ribosomal protein uS12 methylthiotransferase RimO (458 aa).

The MTTase N-terminal domain maps to 6-116 (PKVGFVSLGC…VMEAVHAALP (111 aa)). [4Fe-4S] cluster contacts are provided by C15, C51, C80, C147, C151, and C154. The 239-residue stretch at 133 to 371 (LTPRHYAYLK…AKQAQISALR (239 aa)) folds into the Radical SAM core domain. Residues 373–441 (ESKIGSVQQC…EHDLFGDALP (69 aa)) form the TRAM domain.

Belongs to the methylthiotransferase family. RimO subfamily. [4Fe-4S] cluster is required as a cofactor.

It is found in the cytoplasm. The catalysed reaction is L-aspartate(89)-[ribosomal protein uS12]-hydrogen + (sulfur carrier)-SH + AH2 + 2 S-adenosyl-L-methionine = 3-methylsulfanyl-L-aspartate(89)-[ribosomal protein uS12]-hydrogen + (sulfur carrier)-H + 5'-deoxyadenosine + L-methionine + A + S-adenosyl-L-homocysteine + 2 H(+). In terms of biological role, catalyzes the methylthiolation of an aspartic acid residue of ribosomal protein uS12. The polypeptide is Ribosomal protein uS12 methylthiotransferase RimO (Xanthomonas euvesicatoria pv. vesicatoria (strain 85-10) (Xanthomonas campestris pv. vesicatoria)).